We begin with the raw amino-acid sequence, 609 residues long: Laccase-1 (609 aa).

The first 20 residues, 1–20, serve as a signal peptide directing secretion; sequence MYLSTVLFPLLALNLGLSHA. Residues 45–141 enclose the Plastocyanin-like 1 domain; sequence VFTNGEYPGP…DGQVGAMYIR (97 aa). A glycan (N-linked (GlcNAc...) asparagine) is linked at N75. Cu cation-binding residues include H79, H81, H123, and H125. An N-linked (GlcNAc...) asparagine glycan is attached at N257. The Plastocyanin-like 2 domain occupies 270-372; the sequence is TPSSVEPPVI…MSVYAILSYV (103 aa). N403, N443, and N486 each carry an N-linked (GlcNAc...) asparagine glycan. One can recognise a Plastocyanin-like 3 domain in the interval 463–602; that stretch reads STPLLFEPDP…MGGMALALLD (140 aa). Cu cation contacts are provided by H508, H511, and H513. N-linked (GlcNAc...) asparagine glycosylation is found at N531 and N546. Cu cation contacts are provided by H585, C586, H587, and H591.

The protein belongs to the multicopper oxidase family. Cu cation is required as a cofactor.

Its subcellular location is the secreted. The enzyme catalyses 4 hydroquinone + O2 = 4 benzosemiquinone + 2 H2O. In terms of biological role, required for the conversion of the yellow polyketide pigment synthesized by wA to the conidial green pigment. The protein is Laccase-1 (yA) of Emericella nidulans (strain FGSC A4 / ATCC 38163 / CBS 112.46 / NRRL 194 / M139) (Aspergillus nidulans).